A 141-amino-acid polypeptide reads, in one-letter code: MSNKKVIKLIKLQIPGGKANPAPPIGPALGAAGVNIMGFCKEFNAATQDRPGDLLPVVITVYSDKTFTFITKQPPVSSLIKKALNLESGSKIPNRNKVGKLTQAQVTAIAEQKMKDMDVVLLESAKRMVEGTARSMGIDVE.

This sequence belongs to the universal ribosomal protein uL11 family. As to quaternary structure, part of the ribosomal stalk of the 50S ribosomal subunit. Interacts with L10 and the large rRNA to form the base of the stalk. L10 forms an elongated spine to which L12 dimers bind in a sequential fashion forming a multimeric L10(L12)X complex. One or more lysine residues are methylated.

Its function is as follows. Forms part of the ribosomal stalk which helps the ribosome interact with GTP-bound translation factors. This is Large ribosomal subunit protein uL11 from Chlamydia abortus (strain DSM 27085 / S26/3) (Chlamydophila abortus).